The primary structure comprises 285 residues: Ribosomal RNA small subunit methyltransferase A (285 aa).

6 residues coordinate S-adenosyl-L-methionine: N11, L13, G37, E57, D85, and N105.

This sequence belongs to the class I-like SAM-binding methyltransferase superfamily. rRNA adenine N(6)-methyltransferase family. RsmA subfamily.

The protein resides in the cytoplasm. The enzyme catalyses adenosine(1518)/adenosine(1519) in 16S rRNA + 4 S-adenosyl-L-methionine = N(6)-dimethyladenosine(1518)/N(6)-dimethyladenosine(1519) in 16S rRNA + 4 S-adenosyl-L-homocysteine + 4 H(+). Functionally, specifically dimethylates two adjacent adenosines (A1518 and A1519) in the loop of a conserved hairpin near the 3'-end of 16S rRNA in the 30S particle. May play a critical role in biogenesis of 30S subunits. This Campylobacter curvus (strain 525.92) protein is Ribosomal RNA small subunit methyltransferase A.